The primary structure comprises 1400 residues: MKDLLNLLKSQGQVTEFDKIRIALAPPDLIRSWSFGEVKKPETINYRTFKPERDGLFCARIFGPIKDYECLCGKYKRLKHRGVICEKCGVEVTLSKVRRERMGHIELASPTAHIWFLKSLPSRIGLMLDMTLRDIERVLYFESFVVTEPGMTTLERGQLLTDEEYFDAMEEFGDEFEAKMGAEAVQQLLMELDLVEEIKILREEVESTNSDTKLKKLSKRLKLMEAFKDSGNAPEWMVLTVLPVLPPDLRPLVPLDGGRFATSDLNDLYRRVINRNNRLKRLLDLSAPDIIVRNEKRMLQESVDALLDNGRRGRAITGSNKRPLKSLADMIKGKQGRFRQNLLGKRVDYSGRSVIVVGPTLKLHECGLPKKMALELFKPFIFAKLEGRGLATTIKAAKKMVERETAEVWDILAEVIREHPVMLNRAPTLHRLGIQAFEPVLIEGKAIQLHPLVCAAFNADFDGDQMAVHVPLTLEAQLEARALMMSTNNILSPANGEPIIGPTQDVVLGLYYISRDRVNAQGEGHVFADTKEVMRALGNKQVHIHARVKVRVHEVVKDLEGNVEERTFIADTTPGRCKLWDIVPAGLGFDMVNQNMTKKAISKLLNTCYRILGTKETCIFADQLMYLGFREATLSGSSIGVEDMVIPDAKYTMIDAAEEEVREIEEQFASGLVTRGERYNKVVDIWARTNDQIAKAMMENLRVEVVKNRDGKDEEQGSFNSIFMMADSGARGSAAQIRQLAGMRGLMAKPDGSIIETPITSNFREGLNVLQYFISTHGARKGLADTALKTANSGYLTRRLVDVAQDLVVNHIDCGTEEGLLMTPLIEGGDVVEPLRERVLGRVVARDVMNPLNQDEVAVEAGTLLDEVWVAQLETMGVDEVLVRSPITCATRWGVCATCYGRDLARGHQVNVGEAVGVIAAQSIGEPGTQLTMRTFHIGGAASRASAVSSIQIKHGGKVRFHNAKHVQHKDGLVIVSRSADLAVADELGRERERYKLPYGATVTVNEGDEVSGGQVVATWDPHTHPIIAEVEGKVQFGDMEEGITVNHQTDELTGLTNIEMLSSQNRPSAGKDMRPVIRVLDSKGKPIVMPNTDMPAQYFLPGGALCGLKDGANIGVGDVIARIPQESSKTRDITGGLPRVADLFEARNPKEAAILAEKTGTVSFGKETKGKVRLVITPDNSDDNYEELIPKWRQLNVFEGERVEKGEVVSDGPLNPHDILRLKGESELARYIVNEVQEVYRLQGVKINDKHIETIIRQMLRKVEILEVGESHFIKGEQAEYARVMEEIDRLKAEDKMLPQYQRLLLGITKASLATESFISAASFQETTRVLTEAAVTGKEDDLRGLKENVVVGRLIPAGTGYAYHMERRRQRADARGPEAPTMDEVEAALSEALSSSGE.

Zn(2+) is bound by residues Cys-70, Cys-72, Cys-85, and Cys-88. Asp-460, Asp-462, and Asp-464 together coordinate Mg(2+). Cys-814, Cys-889, Cys-896, and Cys-899 together coordinate Zn(2+).

The protein belongs to the RNA polymerase beta' chain family. In terms of assembly, the RNAP catalytic core consists of 2 alpha, 1 beta, 1 beta' and 1 omega subunit. When a sigma factor is associated with the core the holoenzyme is formed, which can initiate transcription. The cofactor is Mg(2+). Zn(2+) is required as a cofactor.

It carries out the reaction RNA(n) + a ribonucleoside 5'-triphosphate = RNA(n+1) + diphosphate. Its function is as follows. DNA-dependent RNA polymerase catalyzes the transcription of DNA into RNA using the four ribonucleoside triphosphates as substrates. The polypeptide is DNA-directed RNA polymerase subunit beta' (Alcanivorax borkumensis (strain ATCC 700651 / DSM 11573 / NCIMB 13689 / SK2)).